We begin with the raw amino-acid sequence, 460 residues long: Orexin receptor type 2 (460 aa).

Topologically, residues M1–E54 are extracellular. N-linked (GlcNAc...) asparagine glycans are attached at residues N14 and N22. The segment at D33–H49 is required for response to orexin-A. Residues W55 to V75 form a helical membrane-spanning segment. At C76–V88 the chain is on the cytoplasmic side. A helical membrane pass occupies residues T89–A110. At T111 to C127 the chain is on the extracellular side. Residues C127 and C210 are joined by a disulfide bond. Residues K128–L150 form a helical membrane-spanning segment. Residues D151–R170 are Cytoplasmic-facing. A helical transmembrane segment spans residues N171–M191. The Extracellular portion of the chain corresponds to E192 to M222. N202 is a glycosylation site (N-linked (GlcNAc...) asparagine). A helical transmembrane segment spans residues Y223–Y243. The Cytoplasmic segment spans residues L244–R304. Residues M305 to L326 traverse the membrane as a helical segment. Residues K327–V342 lie on the Extracellular side of the membrane. The helical transmembrane segment at Y343 to F366 threads the bilayer. Over L367–V460 the chain is Cytoplasmic.

It belongs to the G-protein coupled receptor 1 family. Expressed in the brain in the cerebral cortex, septal nuclei, hippocampus, medial thalamic groups, dorsal and median raphe nuclei, and many hypothalamic nuclei including the tuberomammillary nucleus, dorsomedial hypothalamus, paraventricular hypothalamic nucleus, and ventral premammillary nucleus. Not detected in the spleen, lung, liver, skeletal muscle, kidney and testis. Orexin receptor mRNA expression has also been reported in the adrenal gland, enteric nervous system, and pancreas.

Its subcellular location is the cell membrane. Nonselective, high-affinity receptor for both orexin-A and orexin-B neuropeptides. Triggers an increase in cytoplasmic Ca(2+) levels in response to orexin-A binding. In Rattus norvegicus (Rat), this protein is Orexin receptor type 2 (Hcrtr2).